A 218-amino-acid polypeptide reads, in one-letter code: Cytidylate kinase (218 aa).

Residue 11-19 (GPGASGKGT) coordinates ATP.

This sequence belongs to the cytidylate kinase family. Type 1 subfamily.

Its subcellular location is the cytoplasm. The catalysed reaction is CMP + ATP = CDP + ADP. It catalyses the reaction dCMP + ATP = dCDP + ADP. This Neisseria gonorrhoeae (strain ATCC 700825 / FA 1090) protein is Cytidylate kinase.